We begin with the raw amino-acid sequence, 236 residues long: 2-C-methyl-D-erythritol 4-phosphate cytidylyltransferase (236 aa).

This sequence belongs to the IspD/TarI cytidylyltransferase family. IspD subfamily. Homodimer.

The catalysed reaction is 2-C-methyl-D-erythritol 4-phosphate + CTP + H(+) = 4-CDP-2-C-methyl-D-erythritol + diphosphate. Its pathway is isoprenoid biosynthesis; isopentenyl diphosphate biosynthesis via DXP pathway; isopentenyl diphosphate from 1-deoxy-D-xylulose 5-phosphate: step 2/6. Catalyzes the formation of 4-diphosphocytidyl-2-C-methyl-D-erythritol from CTP and 2-C-methyl-D-erythritol 4-phosphate (MEP). The sequence is that of 2-C-methyl-D-erythritol 4-phosphate cytidylyltransferase from Escherichia fergusonii (strain ATCC 35469 / DSM 13698 / CCUG 18766 / IAM 14443 / JCM 21226 / LMG 7866 / NBRC 102419 / NCTC 12128 / CDC 0568-73).